The following is a 383-amino-acid chain: S-adenosylmethionine synthase (383 aa).

H16 contributes to the ATP binding site. A Mg(2+)-binding site is contributed by D18. E44 provides a ligand contact to K(+). Residues E57 and Q98 each coordinate L-methionine. The flexible loop stretch occupies residues 98-108; that stretch reads QSPDIAMGVDI. Residues 158–160, 226–227, D235, 241–242, A258, and K262 contribute to the ATP site; these read DQK, RF, and RK. D235 is a binding site for L-methionine. L-methionine is bound at residue K266.

It belongs to the AdoMet synthase family. As to quaternary structure, homotetramer; dimer of dimers. The cofactor is Mg(2+). It depends on K(+) as a cofactor.

The protein resides in the cytoplasm. The catalysed reaction is L-methionine + ATP + H2O = S-adenosyl-L-methionine + phosphate + diphosphate. It participates in amino-acid biosynthesis; S-adenosyl-L-methionine biosynthesis; S-adenosyl-L-methionine from L-methionine: step 1/1. In terms of biological role, catalyzes the formation of S-adenosylmethionine (AdoMet) from methionine and ATP. The overall synthetic reaction is composed of two sequential steps, AdoMet formation and the subsequent tripolyphosphate hydrolysis which occurs prior to release of AdoMet from the enzyme. The sequence is that of S-adenosylmethionine synthase from Fusobacterium nucleatum subsp. nucleatum (strain ATCC 25586 / DSM 15643 / BCRC 10681 / CIP 101130 / JCM 8532 / KCTC 2640 / LMG 13131 / VPI 4355).